The chain runs to 577 residues: Adenine deaminase (577 aa).

The protein belongs to the metallo-dependent hydrolases superfamily. Adenine deaminase family. It depends on Mn(2+) as a cofactor.

The enzyme catalyses adenine + H2O + H(+) = hypoxanthine + NH4(+). The chain is Adenine deaminase from Bacillus velezensis (strain DSM 23117 / BGSC 10A6 / LMG 26770 / FZB42) (Bacillus amyloliquefaciens subsp. plantarum).